Here is a 279-residue protein sequence, read N- to C-terminus: Shikimate dehydrogenase (NADP(+)) (279 aa).

Residues 20 to 22 (SRS) and Thr67 contribute to the shikimate site. Residue Lys71 is the Proton acceptor of the active site. Asp83 provides a ligand contact to NADP(+). The shikimate site is built by Asn92 and Asp108. NADP(+) contacts are provided by residues 134–138 (GAGGA) and Leu223. Tyr225 provides a ligand contact to shikimate. Gly246 contributes to the NADP(+) binding site.

It belongs to the shikimate dehydrogenase family. As to quaternary structure, homodimer.

It catalyses the reaction shikimate + NADP(+) = 3-dehydroshikimate + NADPH + H(+). Its pathway is metabolic intermediate biosynthesis; chorismate biosynthesis; chorismate from D-erythrose 4-phosphate and phosphoenolpyruvate: step 4/7. In terms of biological role, involved in the biosynthesis of the chorismate, which leads to the biosynthesis of aromatic amino acids. Catalyzes the reversible NADPH linked reduction of 3-dehydroshikimate (DHSA) to yield shikimate (SA). This is Shikimate dehydrogenase (NADP(+)) from Cereibacter sphaeroides (strain ATCC 17025 / ATH 2.4.3) (Rhodobacter sphaeroides).